We begin with the raw amino-acid sequence, 394 residues long: MAPAMEEIRQAQRAEGPAAVLAIGTSTPPNALYQADYPDYYFRITKSEHLTELKEKFKRMCDKSMIKKRYMYLTEEILKENPNICAFMAPSLDARQDIVVTEVPKLAKEAAARAIKEWGHPKSRITHLIFCTTSGIDMPGADYQLTRLLGLRPSVNRFMLYQQGCFAGGTVLRLAKDLAENNAGARVLVVCSEITAVTFRGPSESHLDSLVGQALFGDGAAAIIVGSDPDSATERPLFQLVSASQTILPESEGAIDGHLREIGLTFHLLKDVPGLISKNIQKCLLDAFKPLGVHDWNSIFWIAHPGGPAILDQVEIKLGLKAEKLAASRNVLAEYGNMSSACVLFILDEMRRRSAEAGQATTGEGLEWGVLFGFGPGLTVETIVLRSVPIAGAE.

Cys-165 is a catalytic residue.

This sequence belongs to the thiolase-like superfamily. Chalcone/stilbene synthases family.

It carries out the reaction (E)-4-coumaroyl-CoA + 3 malonyl-CoA + 3 H(+) = 2',4,4',6'-tetrahydroxychalcone + 3 CO2 + 4 CoA. It functions in the pathway secondary metabolite biosynthesis; flavonoid biosynthesis. In terms of biological role, the primary product of this enzyme is 4,2',4',6'-tetrahydroxychalcone (also termed naringenin-chalcone or chalcone) which can under specific conditions spontaneously isomerize into naringenin. This Bromheadia finlaysoniana (Orchid) protein is Chalcone synthase 8 (CHS8).